Here is a 474-residue protein sequence, read N- to C-terminus: N-lysine methyltransferase SETD6 (474 aa).

Phosphoserine is present on S14. An SET domain is found at 63 to 287 (PKVLVSRQGT…KGHEIFNTYG (225 aa)). K64 bears the N6-methylated lysine; by autocatalysis mark. 74–76 (AGY) serves as a coordination point for S-adenosyl-L-methionine. Substrate is bound at residue W123. At K180 the chain carries N6-methylated lysine; by autocatalysis. Y224 is a binding site for S-adenosyl-L-methionine. Substrate contacts are provided by S225 and Q227. Residues 252–253 (NH) and Y298 each bind S-adenosyl-L-methionine. The residue at position 373 (K373) is an N6-methylated lysine; by autocatalysis.

The protein belongs to the class V-like SAM-binding methyltransferase superfamily. Histone-lysine methyltransferase family. SETD6 subfamily. In terms of assembly, monomer, homodimer and homotrimer; these structures are stabilized in the presence of S-adenosyl-L-methionine (SAM). In terms of processing, automethylated.

It is found in the nucleus. It catalyses the reaction L-lysyl-[protein] + S-adenosyl-L-methionine = N(6)-methyl-L-lysyl-[protein] + S-adenosyl-L-homocysteine + H(+). The enzyme catalyses L-lysyl(8)-[histone H2AZ] + S-adenosyl-L-methionine = N(6)-methyl-L-lysyl(8)-[histone H2AZ] + S-adenosyl-L-homocysteine + H(+). Its function is as follows. Protein-lysine N-methyltransferase. Monomethylates 'Lys-310' of the RELA subunit of NF-kappa-B complex, leading to down-regulation of NF-kappa-B transcription factor activity. Monomethylates 'Lys-8' of H2AZ (H2AZK8me1). Required for the maintenance of embryonic stem cell self-renewal. Methylates PAK4. The chain is N-lysine methyltransferase SETD6 (Setd6) from Rattus norvegicus (Rat).